The primary structure comprises 234 residues: GTP cyclohydrolase 1 (234 aa).

Positions 1-26 (MDALIKPLRAGKPDAKPADPKGTEFR) are disordered. Basic and acidic residues predominate over residues 11–26 (GKPDAKPADPKGTEFR). Positions 123, 126, and 194 each coordinate Zn(2+).

The protein belongs to the GTP cyclohydrolase I family. In terms of assembly, toroid-shaped homodecamer, composed of two pentamers of five dimers.

The catalysed reaction is GTP + H2O = 7,8-dihydroneopterin 3'-triphosphate + formate + H(+). The protein operates within cofactor biosynthesis; 7,8-dihydroneopterin triphosphate biosynthesis; 7,8-dihydroneopterin triphosphate from GTP: step 1/1. This is GTP cyclohydrolase 1 from Rhodopseudomonas palustris (strain BisB18).